The chain runs to 558 residues: MDVDLPPPGPLTSGGLRVTALGGINEIGRNMTVFEHLGRLLIIDCGVLFPGHDEPGVDLILPDMRHVEDRLDDIEALVLTHGHEDHIGAIPFLLKLRPDIPVVGSKFTLALVAEKCREYRITPVFVEVREGQSTRHGVFECEYFAVNHSTPDALAIAVYTGAGTILHTGDIKFDQLPPDGRPTDLPGMSRLGDTGVDLLLCDSTNAEIPGVGPSESEVGPTLHRLIRGADGRVIVACFASNVDRVQQIIDAAVALGRRVSFVGRSMVRNMRVARQLGFLRVADSDLIDIAAAETMAPDQVVLITTGTQGEPMSALSRMSRGEHRSITLTAGDLIVLSSSLIPGNEEAVFGVIDALSKIGARVVTNAQARVHVSGHAYAGELLFLYNGVRPRNVMPVHGTWRMLRANAKLAASTGVPQESILLAENGVSVDLVAGKASISGAVPVGKMFVDGLIAGDVGDITLGERLILSSGFVAVTVVVRRGTGQPLAAPHLHSRGFSEDPKALEPAVRKVEAELESLVAANVTDPIRIAQGVRRTVGKWVGETYRRQPMIVPTVIEV.

The Zn(2+) site is built by histidine 81, histidine 83, aspartate 85, histidine 86, histidine 148, and aspartate 170. 371–375 (HVSGH) contributes to the substrate binding site. Histidine 397 contributes to the Zn(2+) binding site.

The protein belongs to the metallo-beta-lactamase superfamily. RNA-metabolizing metallo-beta-lactamase-like family. Bacterial RNase J subfamily. In terms of assembly, homodimer, may be a subunit of the RNA degradosome. Zn(2+) serves as cofactor.

Its subcellular location is the cytoplasm. In terms of biological role, an RNase that has 5'-3' exonuclease and possibly endoonuclease activity. Involved in maturation of rRNA and in some organisms also mRNA maturation and/or decay. The protein is Ribonuclease J of Mycobacterium tuberculosis (strain CDC 1551 / Oshkosh).